The chain runs to 290 residues: UPF0750 membrane protein YdeO (290 aa).

Transmembrane regions (helical) follow at residues 18-38, 56-76, 83-103, 112-132, and 165-185; these read IIMV…VLIP, LFNL…VWLG, SFAL…SFFH, DTLL…GLAL, and LFVF…LSVI.

Belongs to the UPF0750 family.

Its subcellular location is the cell membrane. The protein is UPF0750 membrane protein YdeO (ydeO) of Bacillus subtilis (strain 168).